We begin with the raw amino-acid sequence, 133 residues long: Holo-[acyl-carrier-protein] synthase (133 aa).

The Mg(2+) site is built by Asp8 and Glu56.

The protein belongs to the P-Pant transferase superfamily. AcpS family. Requires Mg(2+) as cofactor.

The protein resides in the cytoplasm. It carries out the reaction apo-[ACP] + CoA = holo-[ACP] + adenosine 3',5'-bisphosphate + H(+). Its function is as follows. Transfers the 4'-phosphopantetheine moiety from coenzyme A to a Ser of acyl-carrier-protein. In Clostridium perfringens (strain SM101 / Type A), this protein is Holo-[acyl-carrier-protein] synthase.